Reading from the N-terminus, the 341-residue chain is Heterogeneous nuclear ribonucleoproteins A2/B1 (341 aa).

RRM domains are found at residues 9 to 92 (RKLF…ESGK) and 100 to 179 (KKLF…LSRQ). Lys10 participates in a covalent cross-link: Glycyl lysine isopeptide (Lys-Gly) (interchain with G-Cter in SUMO2). Ser17 carries the phosphoserine modification. Arg26 bears the Omega-N-methylarginine mark. Ser73 is subject to Phosphoserine. N6,N6-dimethyllysine; alternate is present on Lys92. Residue Lys92 forms a Glycyl lysine isopeptide (Lys-Gly) (interchain with G-Cter in SUMO2); alternate linkage. Glycyl lysine isopeptide (Lys-Gly) (interchain with G-Cter in SUMO2) cross-links involve residues Lys100, Lys108, and Lys125. Thr128 carries the phosphothreonine modification. Ser137 bears the Phosphoserine mark. Residue Lys140 forms a Glycyl lysine isopeptide (Lys-Gly) (interchain with G-Cter in SUMO2) linkage. A Phosphothreonine modification is found at Thr147. Glycyl lysine isopeptide (Lys-Gly) (interchain with G-Cter in SUMO2); alternate cross-links involve residues Lys156 and Lys161. Lys156 and Lys161 each carry N6-acetyllysine; alternate. The residue at position 164 (Thr164) is a Phosphothreonine. A Glycyl lysine isopeptide (Lys-Gly) (interchain with G-Cter in SUMO2) cross-link involves residue Lys174. Phosphoserine occurs at positions 177 and 189. Positions 181-341 (MQEVQSSRSG…SGGYGGRSRY (161 aa)) are disordered. The segment covering 190–211 (GRGGNFGFGDSRGGGGNFGPGP) has biased composition (gly residues). Arg191 is modified (asymmetric dimethylarginine; alternate). Arg191 bears the Dimethylated arginine; alternate mark. Arg191 bears the Omega-N-methylarginine; alternate mark. Position 200 is a phosphoserine (Ser200). Asymmetric dimethylarginine; alternate is present on Arg201. Arg201 is modified (dimethylated arginine; alternate). Residue Arg201 is modified to Omega-N-methylarginine; alternate. The residue at position 213 (Ser213) is a Phosphoserine. Arg216 carries the omega-N-methylarginine modification. Ser219 and Ser224 each carry phosphoserine. The residue at position 226 (Arg226) is an Omega-N-methylarginine. A Phosphoserine modification is found at Ser247. Arg254 is modified (asymmetric dimethylarginine; alternate). The residue at position 254 (Arg254) is an Omega-N-methylarginine; alternate. The nuclear targeting sequence stretch occupies residues 296-335 (QQPSNYGPMKSGNFGGSRNMGGPYGGGNYGPGGSGGSGGY). Residues 308 to 341 (NFGGSRNMGGPYGGGNYGPGGSGGSGGYGGRSRY) show a composition bias toward gly residues. The residue at position 312 (Ser312) is a Phosphoserine. The residue at position 313 (Arg313) is an Omega-N-methylarginine. Tyr319 is modified (phosphotyrosine). Residues Ser329 and Ser332 each carry the phosphoserine modification. Tyr335 is subject to Phosphotyrosine. At Arg338 the chain carries Omega-N-methylarginine.

Identified in the spliceosome C complex. Identified in a IGF2BP1-dependent mRNP granule complex containing untranslated mRNAs. Interacts with IGF2BP1. Interacts with C9orf72. Interacts with DGCR8. Interacts with TARDBP. Interacts with CKAP5. Interacts with PPIA/CYPA. Interacts (via C-terminus) with FAM76B; the interaction results in retention of HNRNPA2B1 in the nucleus and inhibition of the NF-kappa-B-mediated inflammatory pathway. Interacts with NF-kappa-B inhibitors NFKBIA and NFKBIE; the interaction may be mediated by the RRM2 domain of HNRNPA2B1, and HNRNPA2B1 may interact simultaneously with FAM76B and either NFKBIA or NFKBIE to form a complex. In terms of processing, sumoylated in exosomes, promoting miRNAs-binding. Asymmetric dimethylation at Arg-254 constitutes the major methylation site. According to a report, methylation affects subcellular location and promotes nuclear localization. According to another report, methylation at Arg-254 does not influence nucleocytoplasmic shuttling.

The protein localises to the nucleus. The protein resides in the nucleoplasm. It localises to the cytoplasmic granule. It is found in the secreted. Its subcellular location is the extracellular exosome. Heterogeneous nuclear ribonucleoprotein (hnRNP) that associates with nascent pre-mRNAs, packaging them into hnRNP particles. The hnRNP particle arrangement on nascent hnRNA is non-random and sequence-dependent and serves to condense and stabilize the transcripts and minimize tangling and knotting. Packaging plays a role in various processes such as transcription, pre-mRNA processing, RNA nuclear export, subcellular location, mRNA translation and stability of mature mRNAs. Forms hnRNP particles with at least 20 other different hnRNP and heterogeneous nuclear RNA in the nucleus. Involved in transport of specific mRNAs to the cytoplasm in oligodendrocytes and neurons: acts by specifically recognizing and binding the A2RE (21 nucleotide hnRNP A2 response element) or the A2RE11 (derivative 11 nucleotide oligonucleotide) sequence motifs present on some mRNAs, and promotes their transport to the cytoplasm. Specifically binds single-stranded telomeric DNA sequences, protecting telomeric DNA repeat against endonuclease digestion. Also binds other RNA molecules, such as primary miRNA (pri-miRNAs): acts as a nuclear 'reader' of the N6-methyladenosine (m6A) mark by specifically recognizing and binding a subset of nuclear m6A-containing pri-miRNAs. Binding to m6A-containing pri-miRNAs promotes pri-miRNA processing by enhancing binding of DGCR8 to pri-miRNA transcripts. Involved in miRNA sorting into exosomes following sumoylation, possibly by binding (m6A)-containing pre-miRNAs. Acts as a regulator of efficiency of mRNA splicing, possibly by binding to m6A-containing pre-mRNAs. Plays a role in the splicing of pyruvate kinase PKM by binding repressively to sequences flanking PKM exon 9, inhibiting exon 9 inclusion and resulting in exon 10 inclusion and production of the PKM M2 isoform. The chain is Heterogeneous nuclear ribonucleoproteins A2/B1 (HNRNPA2B1) from Bos taurus (Bovine).